Reading from the N-terminus, the 139-residue chain is Putative esterase PM0788 (139 aa).

The protein belongs to the thioesterase PaaI family.

The chain is Putative esterase PM0788 from Pasteurella multocida (strain Pm70).